Here is a 927-residue protein sequence, read N- to C-terminus: Huntington interacting protein related 1 (927 aa).

The 130-residue stretch at Ala7–Pro136 folds into the ENTH domain. Residues Arg336–Gln524 are a coiled coil. Residues Gln673–Ala914 form the I/LWEQ domain.

Belongs to the SLA2 family.

It localises to the cytoplasm. It is found in the cytoskeleton. Functionally, regulates pre-synaptic vesicle recycling at neuromuscular junctions of mechanosensory neurons. Plays a role in maintaining a normal defecation cycle. The sequence is that of Huntington interacting protein related 1 (hipr-1) from Caenorhabditis elegans.